We begin with the raw amino-acid sequence, 63 residues long: Large ribosomal subunit protein uL30 (63 aa).

The protein belongs to the universal ribosomal protein uL30 family. In terms of assembly, part of the 50S ribosomal subunit.

The polypeptide is Large ribosomal subunit protein uL30 (Rickettsia africae (strain ESF-5)).